The sequence spans 313 residues: 2-phosphoglycerate kinase (313 aa).

Residues Asn-8–Ser-95 form the ATP-cone domain.

It belongs to the 2-phosphoglycerate kinase family. Requires a divalent metal cation as cofactor.

The enzyme catalyses (2R)-2-phosphoglycerate + ATP = (2R)-2,3-bisphosphoglycerate + ADP + H(+). Its pathway is thermoadapter biosynthesis; cyclic 2,3-diphosphoglycerate biosynthesis; cyclic 2,3-diphosphoglycerate from 2-phospho-D-glycerate: step 1/2. Functionally, catalyzes the phosphorylation of 2-phosphoglycerate to 2,3-diphosphoglycerate. Involved in the biosynthesis of cyclic 2,3-bisphosphoglycerate, a thermoprotectant. The chain is 2-phosphoglycerate kinase from Methanococcus vannielii (strain ATCC 35089 / DSM 1224 / JCM 13029 / OCM 148 / SB).